The primary structure comprises 250 residues: MGQKSNPNGLRLGIIRTWESKWYDVDKKVPFLVGEDFKIRTLIKNHYPKSTISQIEIKRLKKSNDEFIEIDLYTSKIGIIQGPENKNKNSLINKIEKLINKKIQINIFEVKAFNKIAILVAQNIAMQLQQRAFYKAVLKSAIQKALKSGIKGIKIIITGRLGGAEKARRNSISMGIVPLNTLRADIDYAFEEAHTTYGVLGVKVIINHGEVLPNKTIADTRQIFSSQYENKKNNNKRHFVNKKNFKTSTS.

The KH type-2 domain occupies isoleucine 39 to lysine 111.

The protein belongs to the universal ribosomal protein uS3 family. As to quaternary structure, part of the 30S ribosomal subunit. Forms a tight complex with proteins S10 and S14.

In terms of biological role, binds the lower part of the 30S subunit head. Binds mRNA in the 70S ribosome, positioning it for translation. The chain is Small ribosomal subunit protein uS3 from Elm witches'-broom phytoplasma.